A 603-amino-acid polypeptide reads, in one-letter code: Prostaglandin G/H synthase 1 (603 aa).

The N-terminal stretch at 1 to 27 is a signal peptide; sequence MSRGSRLHRWPLLLLLLLLLPPPPVLP. Residues 35 to 73 form the EGF-like domain; sequence PVNPCCYYPCQHQGICVRFGLDRYQCDCTRTGYSGPNCT. 4 cysteine pairs are disulfide-bonded: C39/C50, C40/C162, C44/C60, and C62/C72. 3 N-linked (GlcNAc...) asparagine glycosylation sites follow: N71, N107, and N147. H210 functions as the Proton acceptor in the catalytic mechanism. The active-site For cyclooxygenase activity is the Y388. H391 is a heme b binding site. Cysteines 572 and 578 form a disulfide.

This sequence belongs to the prostaglandin G/H synthase family. In terms of assembly, homodimer. Heme b serves as cofactor. N-glycosylated. N-linked glycosylation is necessary for enzymatic activity. As to expression, brain cortex. Isoform 2 is expressed in the cerebral cortex and heart.

It is found in the microsome membrane. The protein resides in the endoplasmic reticulum membrane. The enzyme catalyses (5Z,8Z,11Z,14Z)-eicosatetraenoate + AH2 + 2 O2 = prostaglandin H2 + A + H2O. The catalysed reaction is (5Z,8Z,11Z,14Z)-eicosatetraenoate + 2 O2 = prostaglandin G2. It catalyses the reaction prostaglandin G2 + AH2 = prostaglandin H2 + A + H2O. It carries out the reaction (9Z,12Z)-octadecadienoate + AH2 + O2 = (9R)-hydroxy-(10E,12Z)-octadecadienoate + A + H2O. The enzyme catalyses (9Z,12Z)-octadecadienoate + AH2 + O2 = (9S)-hydroxy-(10E,12Z)-octadecadienoate + A + H2O. The catalysed reaction is (9Z,12Z)-octadecadienoate + AH2 + O2 = (13S)-hydroxy-(9Z,11E)-octadecadienoate + A + H2O. It catalyses the reaction (9Z,12Z)-octadecadienoate + AH2 + O2 = (13R)-hydroxy-(9Z,11E)-octadecadienoate + A + H2O. It functions in the pathway lipid metabolism; prostaglandin biosynthesis. Its activity is regulated as follows. The cyclooxygenase activity is inhibited by nonsteroidal anti-inflammatory drugs (NSAIDs) including ibuprofen, flurbiprofen, ketoprofen, naproxen, flurbiprofen, anirolac, fenclofenac and diclofenac. In terms of biological role, dual cyclooxygenase and peroxidase that plays an important role in the biosynthesis pathway of prostanoids, a class of C20 oxylipins mainly derived from arachidonate ((5Z,8Z,11Z,14Z)-eicosatetraenoate, AA, C20:4(n-6)), with a particular role in the inflammatory response. The cyclooxygenase activity oxygenates AA to the hydroperoxy endoperoxide prostaglandin G2 (PGG2), and the peroxidase activity reduces PGG2 to the hydroxy endoperoxide prostaglandin H2 (PGH2), the precursor of all 2-series prostaglandins and thromboxanes. This complex transformation is initiated by abstraction of hydrogen at carbon 13 (with S-stereochemistry), followed by insertion of molecular O2 to form the endoperoxide bridge between carbon 9 and 11 that defines prostaglandins. The insertion of a second molecule of O2 (bis-oxygenase activity) yields a hydroperoxy group in PGG2 that is then reduced to PGH2 by two electrons. Involved in the constitutive production of prostanoids in particular in the stomach and platelets. In gastric epithelial cells, it is a key step in the generation of prostaglandins, such as prostaglandin E2 (PGE2), which plays an important role in cytoprotection. In platelets, it is involved in the generation of thromboxane A2 (TXA2), which promotes platelet activation and aggregation, vasoconstriction and proliferation of vascular smooth muscle cells. Can also use linoleate (LA, (9Z,12Z)-octadecadienoate, C18:2(n-6)) as substrate and produce hydroxyoctadecadienoates (HODEs) in a regio- and stereospecific manner, being (9R)-HODE ((9R)-hydroxy-(10E,12Z)-octadecadienoate) and (13S)-HODE ((13S)-hydroxy-(9Z,11E)-octadecadienoate) its major products. This is Prostaglandin G/H synthase 1 (PTGS1) from Canis lupus familiaris (Dog).